Reading from the N-terminus, the 356-residue chain is UDP-N-acetylglucosamine--N-acetylmuramyl-(pentapeptide) pyrophosphoryl-undecaprenol N-acetylglucosamine transferase (356 aa).

UDP-N-acetyl-alpha-D-glucosamine is bound by residues 10–12 (TAG), N123, R159, S193, I240, and Q284.

It belongs to the glycosyltransferase 28 family. MurG subfamily.

The protein resides in the cell membrane. The enzyme catalyses di-trans,octa-cis-undecaprenyl diphospho-N-acetyl-alpha-D-muramoyl-L-alanyl-D-glutamyl-meso-2,6-diaminopimeloyl-D-alanyl-D-alanine + UDP-N-acetyl-alpha-D-glucosamine = di-trans,octa-cis-undecaprenyl diphospho-[N-acetyl-alpha-D-glucosaminyl-(1-&gt;4)]-N-acetyl-alpha-D-muramoyl-L-alanyl-D-glutamyl-meso-2,6-diaminopimeloyl-D-alanyl-D-alanine + UDP + H(+). Its pathway is cell wall biogenesis; peptidoglycan biosynthesis. Functionally, cell wall formation. Catalyzes the transfer of a GlcNAc subunit on undecaprenyl-pyrophosphoryl-MurNAc-pentapeptide (lipid intermediate I) to form undecaprenyl-pyrophosphoryl-MurNAc-(pentapeptide)GlcNAc (lipid intermediate II). The sequence is that of UDP-N-acetylglucosamine--N-acetylmuramyl-(pentapeptide) pyrophosphoryl-undecaprenol N-acetylglucosamine transferase from Corynebacterium glutamicum (strain R).